The following is a 1073-amino-acid chain: Self-sufficient cytochrome P450 monooxygenase CYP505AG1 (1073 aa).

Cysteine 409 is a heme binding site. Residues 501-644 (VTILYGSNSG…DLENWEDEHL (144 aa)) enclose the Flavodoxin-like domain. FMN-binding positions include 507-511 (SNSGT) and 588-620 (VFACGHHDWAKTFYKVPIMIDELLARAGAHRVA). The FAD-binding FR-type domain maps to 680 to 909 (HNAVECIVSE…RPCKKQFHLP (230 aa)).

This sequence in the N-terminal section; belongs to the cytochrome P450 family. The cofactor is FAD. FMN serves as cofactor. It depends on heme as a cofactor.

It catalyses the reaction 2 oxidized [cytochrome P450] + NADPH = 2 reduced [cytochrome P450] + NADP(+) + H(+). The catalysed reaction is an organic molecule + reduced [NADPH--hemoprotein reductase] + O2 = an alcohol + oxidized [NADPH--hemoprotein reductase] + H2O + H(+). The enzyme catalyses dodecanoate + reduced [NADPH--hemoprotein reductase] + O2 = 10-hydroxydodecanoate + oxidized [NADPH--hemoprotein reductase] + H2O + H(+). It carries out the reaction tetradecanoate + reduced [NADPH--hemoprotein reductase] + O2 = 12-hydroxytetradecanoate + oxidized [NADPH--hemoprotein reductase] + H2O + H(+). Functionally, self-sufficient cytochrome P450 monooxygenase that catalyzes the regioselective in-chain hydroxylation of alkanes, fatty alcohols, and fatty acids, giving sub-terminal hydroxylation by acting preferentially on the omega-2 position. Prefers fatty acids as substrates, since it hydroxylates the small amounts of dodecanoic acid formed in the presence of an excess of 1-dodecanol. This chain is Self-sufficient cytochrome P450 monooxygenase CYP505AG1, found in Oidiodendron maius (strain Zn).